The chain runs to 476 residues: Aspartyl/glutamyl-tRNA(Asn/Gln) amidotransferase subunit B (476 aa).

This sequence belongs to the GatB/GatE family. GatB subfamily. As to quaternary structure, heterotrimer of A, B and C subunits.

It carries out the reaction L-glutamyl-tRNA(Gln) + L-glutamine + ATP + H2O = L-glutaminyl-tRNA(Gln) + L-glutamate + ADP + phosphate + H(+). The catalysed reaction is L-aspartyl-tRNA(Asn) + L-glutamine + ATP + H2O = L-asparaginyl-tRNA(Asn) + L-glutamate + ADP + phosphate + 2 H(+). In terms of biological role, allows the formation of correctly charged Asn-tRNA(Asn) or Gln-tRNA(Gln) through the transamidation of misacylated Asp-tRNA(Asn) or Glu-tRNA(Gln) in organisms which lack either or both of asparaginyl-tRNA or glutaminyl-tRNA synthetases. The reaction takes place in the presence of glutamine and ATP through an activated phospho-Asp-tRNA(Asn) or phospho-Glu-tRNA(Gln). This chain is Aspartyl/glutamyl-tRNA(Asn/Gln) amidotransferase subunit B, found in Lacticaseibacillus casei (strain BL23) (Lactobacillus casei).